The chain runs to 1690 residues: rRNA biogenesis protein rrp5 (1690 aa).

2 disordered regions span residues 1–42 (MAGN…GASS) and 59–90 (FMES…ELDN). Polar residues predominate over residues 11–32 (ASEGSDSQGNERISSLSANEAT). The segment covering 72 to 83 (KTRPKKKGSKKS) has biased composition (basic residues). 13 consecutive S1 motif domains span residues 109–209 (GSLI…LSLK), 226–289 (GSMI…LTAT), 306–376 (GDYI…VSFL), 398–473 (GFIV…LSFQ), 490–559 (GQFV…LTLK), 579–648 (GTQT…VGCR), 666–739 (GSVL…LSLK), 761–830 (GIKY…MSFK), 866–942 (GKIT…ISHR), 973–1044 (GDEV…IGPL), 1053–1122 (GSRL…LSAR), 1147–1216 (GDIC…MSLK), and 1236–1307 (GSNL…LGLK). Positions 1313–1424 (SDSDISMSDN…EEKDLDEIPS (112 aa)) are disordered. Composition is skewed to acidic residues over residues 1348 to 1367 (QSEE…EEEP), 1390 to 1400 (DTEDSEDEEDE), and 1412 to 1421 (FDDEEKDLDE). T1391 bears the Phosphothreonine mark. Phosphoserine is present on S1394. 3 HAT repeats span residues 1420–1452 (DEIP…YHLN), 1526–1558 (GKVD…FLLN), and 1596–1628 (GDPE…MEMK). Phosphoserine occurs at positions 1684 and 1686.

Component of the ribosomal small subunit (SSU) processome.

The protein localises to the nucleus. The protein resides in the nucleolus. In terms of biological role, involved in the biogenesis of rRNA. Required for the formation of 18S and 5.8S rRNA. The sequence is that of rRNA biogenesis protein rrp5 from Schizosaccharomyces pombe (strain 972 / ATCC 24843) (Fission yeast).